The chain runs to 394 residues: Small ribosomal subunit protein mS79 (rPPR3b) (394 aa).

Residues 1–24 (MSSLSRFLLRGNFSFSTHTNRRFF) constitute a mitochondrion transit peptide. 8 PPR repeats span residues 105-139 (KEGF…NCKR), 140-170 (TALS…LPGK), 176-210 (DVAS…GLKP), 211-245 (DHIT…NVKR), 246-280 (DIRS…ELKP), 281-315 (DVFT…GCRP), 316-350 (LKFV…RLLV), and 351-385 (DEAV…DYLQ).

Belongs to the PPR family. P subfamily. As to quaternary structure, component of the mitochondrial ribosome small subunit.

Its subcellular location is the mitochondrion. The sequence is that of Small ribosomal subunit protein mS79 (rPPR3b) from Arabidopsis thaliana (Mouse-ear cress).